A 378-amino-acid chain; its full sequence is Erythronate-4-phosphate dehydrogenase (378 aa).

The substrate site is built by Ser45 and Thr66. Positions 146 and 175 each coordinate NAD(+). Arg208 is a catalytic residue. Asp232 serves as a coordination point for NAD(+). Glu237 is an active-site residue. The Proton donor role is filled by His254. Gly257 provides a ligand contact to NAD(+). Residue Tyr258 participates in substrate binding.

Belongs to the D-isomer specific 2-hydroxyacid dehydrogenase family. PdxB subfamily. Homodimer.

It localises to the cytoplasm. The catalysed reaction is 4-phospho-D-erythronate + NAD(+) = (R)-3-hydroxy-2-oxo-4-phosphooxybutanoate + NADH + H(+). It functions in the pathway cofactor biosynthesis; pyridoxine 5'-phosphate biosynthesis; pyridoxine 5'-phosphate from D-erythrose 4-phosphate: step 2/5. Catalyzes the oxidation of erythronate-4-phosphate to 3-hydroxy-2-oxo-4-phosphonooxybutanoate. In Pectobacterium atrosepticum (strain SCRI 1043 / ATCC BAA-672) (Erwinia carotovora subsp. atroseptica), this protein is Erythronate-4-phosphate dehydrogenase.